A 318-amino-acid chain; its full sequence is Protein-methionine-sulfoxide reductase catalytic subunit MsrP (318 aa).

Residues M1–A40 constitute a signal peptide (tat-type signal). Mo-molybdopterin-binding positions include N72, Y75–E76, C130, T165, N217, R222, and S233–K235.

It belongs to the MsrP family. In terms of assembly, heterodimer of a catalytic subunit (MsrP) and a heme-binding subunit (MsrQ). It depends on Mo-molybdopterin as a cofactor. In terms of processing, predicted to be exported by the Tat system. The position of the signal peptide cleavage has not been experimentally proven.

It is found in the periplasm. The catalysed reaction is L-methionyl-[protein] + a quinone + H2O = L-methionyl-(S)-S-oxide-[protein] + a quinol. It carries out the reaction L-methionyl-[protein] + a quinone + H2O = L-methionyl-(R)-S-oxide-[protein] + a quinol. Part of the MsrPQ system that repairs oxidized periplasmic proteins containing methionine sulfoxide residues (Met-O), using respiratory chain electrons. Thus protects these proteins from oxidative-stress damage caused by reactive species of oxygen and chlorine generated by the host defense mechanisms. MsrPQ is essential for the maintenance of envelope integrity under bleach stress, rescuing a wide series of structurally unrelated periplasmic proteins from methionine oxidation. The catalytic subunit MsrP is non-stereospecific, being able to reduce both (R-) and (S-) diastereoisomers of methionine sulfoxide. In Actinobacillus pleuropneumoniae serotype 5b (strain L20), this protein is Protein-methionine-sulfoxide reductase catalytic subunit MsrP.